Consider the following 322-residue polypeptide: Coelomocyte uptake defective protein 15 (322 aa).

The N-terminal stretch at 1–20 is a signal peptide; that stretch reads MVNSLSRILFCSLLIFSVIS. Asn-62, Asn-98, Asn-144, Asn-170, Asn-180, Asn-183, and Asn-222 each carry an N-linked (GlcNAc...) asparagine glycan. Residues 244-264 traverse the membrane as a helical segment; it reads LFGIMITFGTLLLLTALFYAA.

It belongs to the OSTM1 family.

The protein resides in the membrane. Modulates the transport of substances from the endosomal to lysosomal compartments. Plays a role in lysosome formation and function in coelomocytes. This is Coelomocyte uptake defective protein 15 from Caenorhabditis elegans.